The sequence spans 131 residues: Snaclec alboaggregin-A subunit alpha (131 aa).

Residues 1–131 (DCPSDWSSYD…EYPFVCKFXR (131 aa)) enclose the C-type lectin domain. 3 cysteine pairs are disulfide-bonded: cysteine 2/cysteine 13, cysteine 30/cysteine 127, and cysteine 102/cysteine 119.

This sequence belongs to the snaclec family. As to quaternary structure, heterotetramer of the subunits alpha, alpha', beta and beta'; disulfide-linked. In terms of tissue distribution, expressed by the venom gland.

It localises to the secreted. In terms of biological role, potent platelet activator that aggregates platelets via both GPIbalpha (GP1BA) and GPVI (GP6). Induces a tyrosine phosphorylation profile in platelets that resembles this produced by collagen, involving the time dependent tyrosine phosphorylation of Fc receptor gamma chain (FCGR1A), phospholipase Cgamma2 (PLCG2), and LAT. This chain is Snaclec alboaggregin-A subunit alpha, found in Trimeresurus albolabris (White-lipped pit viper).